A 660-amino-acid polypeptide reads, in one-letter code: DNA mismatch repair protein MutL (660 aa).

It belongs to the DNA mismatch repair MutL/HexB family.

This protein is involved in the repair of mismatches in DNA. It is required for dam-dependent methyl-directed DNA mismatch repair. May act as a 'molecular matchmaker', a protein that promotes the formation of a stable complex between two or more DNA-binding proteins in an ATP-dependent manner without itself being part of a final effector complex. The protein is DNA mismatch repair protein MutL of Solibacter usitatus (strain Ellin6076).